A 435-amino-acid chain; its full sequence is Transcription factor tau 55 kDa subunit (435 aa).

The disordered stretch occupies residues 362–417; that stretch reads GLLSPTEENETTNAGQSKGSSTANDPNIQIQEEDVGLPDSTNTSRDHTGDKEEVQS. A Phosphoserine modification is found at Ser-365. Residues 372 to 391 are compositionally biased toward polar residues; sequence TTNAGQSKGSSTANDPNIQI. Residues 405 to 417 are compositionally biased toward basic and acidic residues; that stretch reads SRDHTGDKEEVQS.

As to quaternary structure, component of the TFIIIC complex composed of TFC1, TFC3, TFC4, TFC6, TFC7 and TFC8. The subunits are organized in two globular domains, tauA and tauB, connected by a proteolysis-sensitive and flexible linker.

Its subcellular location is the nucleus. In terms of biological role, TFIIIC mediates tRNA and 5S RNA gene activation by binding to intragenic promoter elements. Upstream of the transcription start site, TFIIIC assembles the initiation complex TFIIIB-TFIIIC-tDNA, which is sufficient for RNA polymerase III recruitment and function. Part of the tauA domain of TFIIIC that binds boxA DNA promoter sites of tRNA and similar genes. The sequence is that of Transcription factor tau 55 kDa subunit (TFC7) from Saccharomyces cerevisiae (strain ATCC 204508 / S288c) (Baker's yeast).